The chain runs to 101 residues: Integration host factor subunit beta (101 aa).

The segment at 57-76 (PARAGRNPRTGEHVPVDQKS) is disordered.

It belongs to the bacterial histone-like protein family. As to quaternary structure, heterodimer of an alpha and a beta chain.

Its function is as follows. This protein is one of the two subunits of integration host factor, a specific DNA-binding protein that functions in genetic recombination as well as in transcriptional and translational control. In Nitrobacter winogradskyi (strain ATCC 25391 / DSM 10237 / CIP 104748 / NCIMB 11846 / Nb-255), this protein is Integration host factor subunit beta.